We begin with the raw amino-acid sequence, 1122 residues long: TSET complex member tstF (1122 aa).

The span at 88–126 (SSSASGINGTNNNNSGSNSSNNNNNNNGSLSNSPNNNNN) shows a compositional bias: low complexity. Disordered stretches follow at residues 88 to 131 (SSSA…AFIG) and 178 to 215 (QTLH…STNS). A compositionally biased stretch (polar residues) spans 178 to 190 (QTLHNRSPNNTIK). The span at 191–215 (LSPNSSNNDSLNNNNNNINNNSTNS) shows a compositional bias: low complexity. WD repeat units follow at residues 298-337 (FENK…IEKQ), 342-381 (PKGT…LATQ), and 383-422 (SKVH…EVSK). Positions 731-775 (NGSVGGSSSNNSANSNNSNNNNNNNNNNSNNSNNNNNSSQPILEP) are disordered.

In terms of assembly, component of the TSET complex, a heterohexamer composed of tstA, tstB, tstC, tstD, tstE and tstF, which may act in plasma membrane turnover. tstA, tstB, tstC and tstD are likely to be the core complex members with tstE and tstF acting as associated scaffold proteins.

This is TSET complex member tstF from Dictyostelium discoideum (Social amoeba).